Reading from the N-terminus, the 295-residue chain is N-acetylmuramic acid 6-phosphate etherase (295 aa).

Residues 53–216 (AIQRFNNGGR…STMTMIGVGK (164 aa)) form the SIS domain. The active-site Proton donor is E81. E112 is an active-site residue.

It belongs to the GCKR-like family. MurNAc-6-P etherase subfamily. In terms of assembly, homodimer.

It carries out the reaction N-acetyl-D-muramate 6-phosphate + H2O = N-acetyl-D-glucosamine 6-phosphate + (R)-lactate. It participates in amino-sugar metabolism; N-acetylmuramate degradation. Its function is as follows. Specifically catalyzes the cleavage of the D-lactyl ether substituent of MurNAc 6-phosphate, producing GlcNAc 6-phosphate and D-lactate. The polypeptide is N-acetylmuramic acid 6-phosphate etherase (Staphylococcus epidermidis (strain ATCC 35984 / DSM 28319 / BCRC 17069 / CCUG 31568 / BM 3577 / RP62A)).